The following is a 354-amino-acid chain: NADH-quinone oxidoreductase subunit H (354 aa).

8 helical membrane passes run 16 to 36, 90 to 110, 126 to 146, 170 to 190, 197 to 217, 249 to 269, 290 to 310, and 329 to 349; these read WLAVLITLVLQAVAVILPVMI, YLFIIAPILALAPAVAAWAVI, VLYVLAVASIGVYGIVISGWA, MGFALVTVLMVADTMNLTGIV, IWNWYWIPLLPMFFVYFISGL, VFFLAEYAMMILISFMTAIMF, VPGFVWLFAKVAFLLFLFLWF, and VLIPVTIVWVFVVGVMEYFKV.

Belongs to the complex I subunit 1 family. NDH-1 is composed of 14 different subunits. Subunits NuoA, H, J, K, L, M, N constitute the membrane sector of the complex.

It is found in the cell inner membrane. The enzyme catalyses a quinone + NADH + 5 H(+)(in) = a quinol + NAD(+) + 4 H(+)(out). In terms of biological role, NDH-1 shuttles electrons from NADH, via FMN and iron-sulfur (Fe-S) centers, to quinones in the respiratory chain. The immediate electron acceptor for the enzyme in this species is believed to be ubiquinone. Couples the redox reaction to proton translocation (for every two electrons transferred, four hydrogen ions are translocated across the cytoplasmic membrane), and thus conserves the redox energy in a proton gradient. This subunit may bind ubiquinone. The protein is NADH-quinone oxidoreductase subunit H of Hydrogenovibrio crunogenus (strain DSM 25203 / XCL-2) (Thiomicrospira crunogena).